A 166-amino-acid polypeptide reads, in one-letter code: Small ribosomal subunit protein uS5 (166 aa).

In terms of domain architecture, S5 DRBM spans 11-74; the sequence is LQEKLIAVNR…EKARRNMMNV (64 aa).

It belongs to the universal ribosomal protein uS5 family. As to quaternary structure, part of the 30S ribosomal subunit. Contacts proteins S4 and S8.

With S4 and S12 plays an important role in translational accuracy. In terms of biological role, located at the back of the 30S subunit body where it stabilizes the conformation of the head with respect to the body. In Buchnera aphidicola subsp. Acyrthosiphon kondoi (Acyrthosiphon kondoi symbiotic bacterium), this protein is Small ribosomal subunit protein uS5.